Here is a 1522-residue protein sequence, read N- to C-terminus: MAEFLPPPECPVFEPSWEEFADPFAFIHKIRPIAEQTGICKVRPPPDWQPPFACDVDKLHFTPRIQRLNELEAQTRVKLNFLDQIAKFWELQGCTLKIPHVERKILDLFQLNRLVAEEGGFDVVCKERKWTKIATRMGFAPGKAVGSHIRAHYERILYPYNLFQSGASLLCLQKPDLTSDTKDKEYKPHDIPQRQSVQPSESCPPARRAKRLRAEATNIKTESDSPEVRTHNLRRRMGCAPPKCENEKETYSAVKLAEKREHAGEQERDKAKARSKKPTSAVDLYVCLLCGSGNDEDRLLLCDGCDDSYHTFCLIPPLHDVPKGDWRCPQCLAQECNKPQEAFGFEQAARDYTLRTFGEMADAFKSDYFNMPVHMVPTELVEKEFWRLVSTIEEDVTVEYGADIASKEFGSGFPVRDGKFKVRPEEEEYLDSGWNLNNMPVMEQSVLAHITADICGMKLPWLYVGMCFSSFCWHIEDHWSYSINYLHWGEPKTWYGAPGYAAEQLEDVMKKLAPELFESQPDLLHQLVTIMNPNTLMAHGVPVYRTNQCAGEFVITFPRAYHSGFNQGFNFAEAVNFCTVDWLPLGRQCIEHYRLLSRYCVFSHDEMICKMASKADILDVVVASTVQKDMAIMIDDEKMLREKVQKLGVTDSERVAFELFPDDERQCYKCKTTCFMSAVYCPCKPGLLVCLYHVEDLCSCPTYQYKLGYRYTLEELYPMMNALKMRAESYNEWASNVNEALEAKISNKRSLISFKALIEESELKKFPDNDLLRHLRLVTQDADKCASVAQQLLNGKRQTRYRSGGGKCPNQLTVNELRLFVRQLYALPCVLSQTPLLKDLLDRVEAFQQQSQKLLSEEMPSAAELQELLDVSFDFDVDLPQLAELRVRLEQARWLEDVQMASAEQNSLTLDDMRRLIDSGVGLAPYPAVEKAMAKLQELLTVSEHWDDKARNLIKARPRQSLSSLVVAVKEIEEIPAYLPSGAALKDAVQKAQDWLQEVEALQVGGRVPVLDTLVELVTRGRSIPVHLDYLPRLESLVAEVQAWKECAANTFLCENSPYSLLEVLCPRCDIGTLGLKRKQKKLKEPMPSGKKRSTKLESLSDLERALSESKDTASAMATLGEARLKEMEALRSLRAANEGKVLCSEEDAELKVCVCQKEPAAPMIQCELCRGFFHTGCVSVPHALQGPRVWLCPQCRRSEKPPLEKILPLLASLQRIRVRLPEGDALRYMIERTVNWQHRAQQMLYSGNLKLLQDKVGSGLLYNRWQSTAGPLPETNKVSQTIGAMSFSMPHDWDNRTIYLHSPFSTGQQCIPLHVVSTELDELMMEAQLLQVSLPEIQELYQILFTKQSPSLQAEQKPSVGPSNEKSECCRGKKDGMSYMERKLKRRFERESFCDEKRARVRKMRTPKKKKLKLSHTKDVSSSSRMERERERLLEAQRSSESHLVPSDTSFSEQEDSEDEDAICPAVTCLQPEGEEVDWVQCDGSCNQWFHQVCVGISPEMAEKEDYICASCAGKGSPYRK.

One can recognise a JmjN domain in the interval 10-51 (CPVFEPSWEEFADPFAFIHKIRPIAEQTGICKVRPPPDWQPP). One can recognise an ARID domain in the interval 75 to 165 (TRVKLNFLDQ…ILYPYNLFQS (91 aa)). Positions 180-192 (DTKDKEYKPHDIP) are enriched in basic and acidic residues. Residues 180 to 229 (DTKDKEYKPHDIPQRQSVQPSESCPPARRAKRLRAEATNIKTESDSPEVR) form a disordered region. Residues 284–334 (LYVCLLCGSGNDEDRLLLCDGCDDSYHTFCLIPPLHDVPKGDWRCPQCLAQ) form a PHD-type 1 zinc finger. Position 400 (tyrosine 400) interacts with 2-oxoglutarate. Residues 428-594 (EYLDSGWNLN…LGRQCIEHYR (167 aa)) form the JmjC domain. Residues histidine 474 and glutamate 476 each contribute to the Fe cation site. The 2-oxoglutarate site is built by serine 482, asparagine 484, and lysine 492. Position 562 (histidine 562) interacts with Fe cation. The segment at 667-719 (CYKCKTTCFMSAVYCPCKPGLLVCLYHVEDLCSCPTYQYKLGYRYTLEELYPM) adopts a C5HC2 zinc-finger fold. A PHD-type 2 zinc finger spans residues 1151–1199 (LKVCVCQKEPAAPMIQCELCRGFFHTGCVSVPHALQGPRVWLCPQCRRS). The span at 1353 to 1365 (LQAEQKPSVGPSN) shows a compositional bias: polar residues. 2 disordered regions span residues 1353 to 1373 (LQAE…CCRG) and 1400 to 1460 (ARVR…DSED). Positions 1400-1416 (ARVRKMRTPKKKKLKLS) are enriched in basic residues. Basic and acidic residues predominate over residues 1426–1442 (RMERERERLLEAQRSSE). A PHD-type 3 zinc finger spans residues 1462-1516 (DAICPAVTCLQPEGEEVDWVQCDGSCNQWFHQVCVGISPEMAEKEDYICASCAGK).

The protein belongs to the JARID1 histone demethylase family. It depends on Fe(2+) as a cofactor.

Its subcellular location is the nucleus. The enzyme catalyses N(6),N(6),N(6)-trimethyl-L-lysyl(4)-[histone H3] + 3 2-oxoglutarate + 3 O2 = L-lysyl(4)-[histone H3] + 3 formaldehyde + 3 succinate + 3 CO2. Its function is as follows. Histone demethylase that demethylates 'Lys-4' of histone H3, thereby playing a central role in histone code. Does not demethylate histone H3 'Lys-9' or H3 'Lys-27'. Demethylates trimethylated, dimethylated and monomethylated H3 'Lys-4'. Acts as a transcriptional corepressor. May repress the CLOCK-BMAL1 heterodimer-mediated transcriptional activation of the core clock component PER2. In Gallus gallus (Chicken), this protein is Lysine-specific demethylase 5B (KDM5B).